The following is a 124-amino-acid chain: Ribulose bisphosphate carboxylase small subunit (124 aa).

It belongs to the RuBisCO small chain family. In terms of assembly, heterohexadecamer of 8 large and 8 small subunits.

RuBisCO catalyzes two reactions: the carboxylation of D-ribulose 1,5-bisphosphate, the primary event in carbon dioxide fixation, as well as the oxidative fragmentation of the pentose substrate. Both reactions occur simultaneously and in competition at the same active site. Although the small subunit is not catalytic it is essential for maximal activity. In Hydrogenophilus thermoluteolus (Pseudomonas hydrogenothermophila), this protein is Ribulose bisphosphate carboxylase small subunit.